A 471-amino-acid polypeptide reads, in one-letter code: MFQAAVGPLQTNISLPEETPGLELNWAALLIVMVIIPTIGGNILVILAVWLEKKLQNATNFFLMSLAVADLLVGLLVMPIALITILYDSDWPLPEPLCPIWLFLDVLFSTASIMHLCAISLDRYIAIKKPIQHSQYKSRAKVMLKIALVWLISICIAIPIPIKGLRNYPHPNNITFTSNHTCVLKTDTFQEFIIFGSLVAFFIPLTIMMIIYFLTVRVLRKKVYLLRSKVTQRFSYPIISTVFQREQAANPPQPEQPDSTGNSLARIQEKTDTDGMSSPTGDEKSFRRLSTMGKKSMQTLTNEQRASKVLGIVFLLFVVMWCPFFITNITSALCGPCDANIIGRLMEIFSWVGYVSSGINPLVYTLFNKTFRQAFTRYITCNYRNFASKEQGRSFRASTVDRMLTHISPRSSVAENAKLFTKQEIKNETTDYRSPLGCLQPSAQTSTGVVLDKILLTHTENCKQEERVSCV.

Over 1-26 (MFQAAVGPLQTNISLPEETPGLELNW) the chain is Extracellular. N-linked (GlcNAc...) asparagine glycosylation occurs at N12. The chain crosses the membrane as a helical span at residues 27-49 (AALLIVMVIIPTIGGNILVILAV). Residues 50–60 (WLEKKLQNATN) lie on the Cytoplasmic side of the membrane. The chain crosses the membrane as a helical span at residues 61–83 (FFLMSLAVADLLVGLLVMPIALI). Topologically, residues 84 to 99 (TILYDSDWPLPEPLCP) are extracellular. C98 and C182 form a disulfide bridge. The chain crosses the membrane as a helical span at residues 100–121 (IWLFLDVLFSTASIMHLCAISL). Ergotamine-binding residues include D105 and T110. A DRY motif; important for ligand-induced conformation changes motif is present at residues 122–124 (DRY). The Cytoplasmic portion of the chain corresponds to 122 to 141 (DRYIAIKKPIQHSQYKSRAK). A helical transmembrane segment spans residues 142–162 (VMLKIALVWLISICIAIPIPI). Over 163–191 (KGLRNYPHPNNITFTSNHTCVLKTDTFQE) the chain is Extracellular. N-linked (GlcNAc...) asparagine glycans are attached at residues N173 and N179. Residue L184 coordinates ergotamine. Positions 187-190 (DTFQ) match the [DE]RFG motif; may stabilize a conformation that preferentially activates signaling via beta-arrestin family members motif. Residues 192–214 (FIIFGSLVAFFIPLTIMMIIYFL) traverse the membrane as a helical segment. Over 215–308 (TVRVLRKKVY…TLTNEQRASK (94 aa)) the chain is Cytoplasmic. Residues 309–329 (VLGIVFLLFVVMWCPFFITNI) traverse the membrane as a helical segment. The Extracellular portion of the chain corresponds to 330–344 (TSALCGPCDANIIGR). C334 and C337 are oxidised to a cystine. The chain crosses the membrane as a helical span at residues 345–366 (LMEIFSWVGYVSSGINPLVYTL). Positions 360-364 (NPLVY) match the NPxxY motif; important for ligand-induced conformation changes and signaling motif. The Cytoplasmic portion of the chain corresponds to 367–471 (FNKTFRQAFT…CKQEERVSCV (105 aa)). C381 carries the S-palmitoyl cysteine lipid modification. The PDZ-binding signature appears at 469 to 471 (SCV).

The protein belongs to the G-protein coupled receptor 1 family. Detected in brain, heart and gut.

The protein resides in the cell membrane. The protein localises to the synapse. It localises to the synaptosome. G-protein coupled receptor for 5-hydroxytryptamine (serotonin). Also functions as a receptor for various ergot alkaloid derivatives and psychoactive substances. Ligand binding causes a conformation change that triggers signaling via guanine nucleotide-binding proteins (G proteins) and modulates the activity of downstream effectors. HTR2B is coupled to G(q)/G(11) G alpha proteins and activates phospholipase C-beta, releasing diacylglycerol (DAG) and inositol 1,4,5-trisphosphate (IP3) second messengers that modulate the activity of phosphatidylinositol 3-kinase and promote the release of Ca(2+) ions from intracellular stores, respectively. Beta-arrestin family members inhibit signaling via G proteins and mediate activation of alternative signaling pathways. Plays a role in the regulation of dopamine and 5-hydroxytryptamine release, 5-hydroxytryptamine uptake and in the regulation of extracellular dopamine and 5-hydroxytryptamine levels, and thereby affects neural activity. The protein is 5-hydroxytryptamine receptor 2B (htr2b) of Dichotomyctere fluviatilis (Green pufferfish).